We begin with the raw amino-acid sequence, 259 residues long: MLDTTKLTMVGTGSAFSKKFYNNSALVTFTNGYKLLIDCGHSVPKGLHDLGFPLESLDGILITHTHADHIGGLEEVALYNKFVLGGRKIDLLVPEPLVEPLWNDSLNGGLRYDDSRELELDDYFTVRSLKTSDCGAARTQIDENIAFTLYTTLHVSHMKSYAVGLIDRGEEKVFYSSDTVFDEYLLDYALTMFPWVFHDCQLFTGGVHASLDELLGYTRYIPEKQQNKIFLMHYGDNVEEFIGKTGRMRFAEQGREIIL.

The beta-lactamase-like stretch occupies residues 21-233; sequence YNNSALVTFT…KQQNKIFLMH (213 aa). His64, His66, Asp68, His69, His154, Asp178, and His233 together coordinate Zn(2+).

The protein belongs to the anti-Pycsar protein Apyc1 family. Homodimer. It depends on Zn(2+) as a cofactor.

It catalyses the reaction 3',5'-cyclic CMP + H2O = CMP + H(+). It carries out the reaction 3',5'-cyclic UMP + H2O = UMP + H(+). Functionally, counteracts the host Pycsar antiviral defense system. Phosphodiesterase that enables metal-dependent hydrolysis of host cyclic nucleotide Pycsar defense signals such as cCMP and cUMP. The chain is Anti-Pycsar protein Apyc1 from Bacillus phage vB_BveM-Goe7.